A 249-amino-acid chain; its full sequence is Low affinity immunoglobulin gamma Fc region receptor III-A (249 aa).

Positions 1–20 (MWYLLLPTALLLTVSSGVGA) are cleaved as a signal peptide. Over 21–203 (GLQKAVVNLD…SPSSFLPWHQ (183 aa)) the chain is Extracellular. Ig-like C2-type domains lie at 31–103 (PEWV…QLDV) and 117–188 (FQEG…LQIS). 2 disulfides stabilise this stretch: Cys46–Cys88 and Cys127–Cys171. Asn55 and Asn62 each carry an N-linked (GlcNAc...) asparagine glycan. The N-linked (GlcNAc...) asparagine glycan is linked to Asn179. The helical transmembrane segment at 204–224 (ITFCLLIGLLFAIDTVLYFSV) threads the bilayer. Over 225–249 (QRSLQSSVAVYEEPKLHWSKEPQDK) the chain is Cytoplasmic. Tyr235 carries the phosphotyrosine modification.

As to quaternary structure, forms a heterooligomeric complex with ITAM-containing signaling subunits FCER1G. Interacts (via transmembrane domain) with signaling subunits; this interaction is a prerequisite for receptor complex expression on the cell surface and intracellular signal transduction. Binds the Fc region of antigen-complexed IgG. Post-translationally, N-glycosylated. Phosphorylated following receptor ligation.

The protein resides in the cell membrane. Receptor for the invariable Fc fragment of immunoglobulin gamma (IgG). Binds with intermediate affinity to both IgG2a and IgG2b. Can bind to IgG2a and IgG2b monomers. Does not display binding to IgG1 or IgG3. Recognizes neutralizing virus-specific IgGs displayed on the cell surface of infected cells and triggers antibody-dependent cellular cytotoxicity (ADCC). Confers protection to lethal influenza virus infection. On splenic dendritic cells, uptakes antigen immune complexes and efficiently divert them into MHC class I and II antigen presentation pathways to provide for superior priming of CD4-positive and CD8-positive T cell immune responses. Mediates neutrophil activation by IgG complexes redundantly with FCGR2A. Plays a role in promoting bone resorption by enhancing osteoclast differentiation following binding to IgG2a. Also acts as a receptor for the Fc region of immunoglobulin epsilon (IgE). Binds with low affinity to both the a and b allotypes of IgE. Has also been shown to bind to IgE allotype a only but not to allotype b. Binds aggregated IgE but not the monomeric form and bound monomeric IgG is readily displaced by IgE complexes. Binding to IgE promotes macrophage-mediated phagocytosis, antigen presentation to T cells, production of pro-inflammatory cytokines and the late phase of cutaneous allergic reactions. Mediates enhanced ADCC in response to afucosylated IgGs. The protein is Low affinity immunoglobulin gamma Fc region receptor III-A of Rattus norvegicus (Rat).